The sequence spans 756 residues: Zinc finger and BTB domain-containing protein 49 (756 aa).

A BTB domain is found at 25 to 91 (CDCMLVVRGV…MYTSRLDLNQ (67 aa)). 3 disordered regions span residues 176 to 197 (APSA…GGSC), 226 to 290 (PSQV…LSEP), and 311 to 379 (SQQS…PSQA). A compositionally biased stretch (polar residues) spans 226–242 (PSQVPATQQPLTRSAST). 2 stretches are compositionally biased toward basic and acidic residues: residues 319 to 341 (SHPE…DAVE) and 348 to 365 (AEEK…REEE). C2H2-type zinc fingers lie at residues 386–408 (YACE…KRSH), 414–436 (FECN…LRRH), 442–464 (YICE…IIIH), 470–492 (HLCD…KKTH), 498–520 (FTCD…RVRH), 526–548 (YSCP…VRTH), and 554–576 (YSCE…KRMH).

This sequence belongs to the krueppel C2H2-type zinc-finger protein family. As to quaternary structure, interacts with EP300, KAT5/Tip60 and ZBTB17. The interaction with EP300 is direct and leads to synergistic induction of CDKN1A. On the CDKN1A promoter, forms a complex with ZBTB17; this interaction leads to additive CDKN1A transactivation. The interaction with ZBTB17 may block ZBTB17 repressor activity. In terms of tissue distribution, widely expressed, with highest levels in white adipose tissue and kidney, intermediate levels in brain, liver and heart, and lowest levels in spleen, brown adipose tissue and muscle.

Its subcellular location is the cytoplasm. The protein resides in the nucleus. Transcription factor. Inhibits cell proliferation by activating either CDKN1A/p21 transcription or RB1 transcription. The sequence is that of Zinc finger and BTB domain-containing protein 49 (Zbtb49) from Mus musculus (Mouse).